A 212-amino-acid chain; its full sequence is Thiamine-phosphate synthase (212 aa).

4-amino-2-methyl-5-(diphosphooxymethyl)pyrimidine-binding positions include 35-39 (QLRRK) and Asn67. Positions 68 and 87 each coordinate Mg(2+). Ser106 lines the 4-amino-2-methyl-5-(diphosphooxymethyl)pyrimidine pocket. 132-134 (TGS) contributes to the 2-[(2R,5Z)-2-carboxy-4-methylthiazol-5(2H)-ylidene]ethyl phosphate binding site. Lys135 is a 4-amino-2-methyl-5-(diphosphooxymethyl)pyrimidine binding site. Residues Gly163 and 183 to 184 (IS) each bind 2-[(2R,5Z)-2-carboxy-4-methylthiazol-5(2H)-ylidene]ethyl phosphate.

This sequence belongs to the thiamine-phosphate synthase family. Requires Mg(2+) as cofactor.

It carries out the reaction 2-[(2R,5Z)-2-carboxy-4-methylthiazol-5(2H)-ylidene]ethyl phosphate + 4-amino-2-methyl-5-(diphosphooxymethyl)pyrimidine + 2 H(+) = thiamine phosphate + CO2 + diphosphate. It catalyses the reaction 2-(2-carboxy-4-methylthiazol-5-yl)ethyl phosphate + 4-amino-2-methyl-5-(diphosphooxymethyl)pyrimidine + 2 H(+) = thiamine phosphate + CO2 + diphosphate. The catalysed reaction is 4-methyl-5-(2-phosphooxyethyl)-thiazole + 4-amino-2-methyl-5-(diphosphooxymethyl)pyrimidine + H(+) = thiamine phosphate + diphosphate. It participates in cofactor biosynthesis; thiamine diphosphate biosynthesis; thiamine phosphate from 4-amino-2-methyl-5-diphosphomethylpyrimidine and 4-methyl-5-(2-phosphoethyl)-thiazole: step 1/1. Condenses 4-methyl-5-(beta-hydroxyethyl)thiazole monophosphate (THZ-P) and 2-methyl-4-amino-5-hydroxymethyl pyrimidine pyrophosphate (HMP-PP) to form thiamine monophosphate (TMP). The chain is Thiamine-phosphate synthase from Chlorobium luteolum (strain DSM 273 / BCRC 81028 / 2530) (Pelodictyon luteolum).